The chain runs to 204 residues: RNA-free ribonuclease P (204 aa).

The protein belongs to the HARP family.

The catalysed reaction is Endonucleolytic cleavage of RNA, removing 5'-extranucleotides from tRNA precursor.. Its function is as follows. RNA-free RNase P that catalyzes the removal of the 5'-leader sequence from pre-tRNA to produce the mature 5'-terminus. The chain is RNA-free ribonuclease P from Ignicoccus hospitalis (strain KIN4/I / DSM 18386 / JCM 14125).